The primary structure comprises 368 residues: Serine/threonine-protein phosphatase PP2A-like PPG1 (368 aa).

Residues aspartate 50, histidine 52, aspartate 78, and asparagine 110 each contribute to the Mn(2+) site. Histidine 111 serves as the catalytic Proton donor. Mn(2+) contacts are provided by histidine 161 and histidine 247.

It belongs to the PPP phosphatase family. PP-2A subfamily. Inactivated in a complex with phosphatase methylesterase PPE1 (PP2Ai). Interacts with phosphatase 2A activator RRD1, which can reactivate PP2Ai by dissociating the catalytic subunit from the complex. Interacts with TAP42. The cofactor is Mn(2+). Reversibly methyl esterified on Leu-368 by leucine carboxyl methyltransferase 1 (PPM1) and protein phosphatase methylesterase 1 (PPE1). Carboxyl methylation influences the affinity of the catalytic subunit for the different regulatory subunits, thereby modulating the PP2A holoenzyme's substrate specificity, enzyme activity and cellular localization.

The enzyme catalyses O-phospho-L-seryl-[protein] + H2O = L-seryl-[protein] + phosphate. The catalysed reaction is O-phospho-L-threonyl-[protein] + H2O = L-threonyl-[protein] + phosphate. Its function is as follows. Involved in glycogen accumulation. In Saccharomyces cerevisiae (strain ATCC 204508 / S288c) (Baker's yeast), this protein is Serine/threonine-protein phosphatase PP2A-like PPG1 (PPG1).